The sequence spans 317 residues: Heme-binding protein HMX1 (317 aa).

Residues 1–289 (MEDSSNTIIP…FNKDSATRRA (289 aa)) lie on the Cytoplasmic side of the membrane. Residues 290–310 (LHTVMLLVLSIIAIWVLYFLV) traverse the membrane as a helical; Anchor for type IV membrane protein segment.

Requires heme as cofactor.

The protein localises to the endoplasmic reticulum membrane. In terms of biological role, plays an important role in the degradation of heme under conditions of iron deprivation. This is Heme-binding protein HMX1 (HMX1) from Saccharomyces cerevisiae (strain ATCC 204508 / S288c) (Baker's yeast).